We begin with the raw amino-acid sequence, 127 residues long: Large ribosomal subunit protein bL12 (127 aa).

It belongs to the bacterial ribosomal protein bL12 family. Homodimer. Part of the ribosomal stalk of the 50S ribosomal subunit. Forms a multimeric L10(L12)X complex, where L10 forms an elongated spine to which 2 to 4 L12 dimers bind in a sequential fashion. Binds GTP-bound translation factors.

Forms part of the ribosomal stalk which helps the ribosome interact with GTP-bound translation factors. Is thus essential for accurate translation. In Leptospira interrogans serogroup Icterohaemorrhagiae serovar copenhageni (strain Fiocruz L1-130), this protein is Large ribosomal subunit protein bL12.